The sequence spans 1019 residues: Alpha-mannosidase At3g26720 (1019 aa).

Positions 1-22 (MAVKCFSLYLILAAIVIGGVTS) are cleaved as a signal peptide. Zn(2+) is bound by residues histidine 47 and aspartate 49. The N-linked (GlcNAc...) asparagine glycan is linked to asparagine 64. Aspartate 169 contacts Zn(2+). Residues asparagine 278 and asparagine 336 are each glycosylated (N-linked (GlcNAc...) asparagine). Residue histidine 410 coordinates Zn(2+). Cysteines 466 and 474 form a disulfide. Asparagine 470, asparagine 638, asparagine 730, and asparagine 820 each carry an N-linked (GlcNAc...) asparagine glycan. Cysteines 824 and 829 form a disulfide.

Belongs to the glycosyl hydrolase 38 family. As to quaternary structure, homodimer. Requires Zn(2+) as cofactor.

The enzyme catalyses Hydrolysis of terminal, non-reducing alpha-D-mannose residues in alpha-D-mannosides.. Liberates mannose from p-nitrophenyl-alpha-D-mannoside in vitro. The protein is Alpha-mannosidase At3g26720 of Arabidopsis thaliana (Mouse-ear cress).